The sequence spans 121 residues: Putative iron-sulfur cluster insertion protein ErpA (121 aa).

Iron-sulfur cluster is bound by residues Cys-49, Cys-113, and Cys-115.

It belongs to the HesB/IscA family. As to quaternary structure, homodimer. Iron-sulfur cluster serves as cofactor.

Functionally, required for insertion of 4Fe-4S clusters. The sequence is that of Putative iron-sulfur cluster insertion protein ErpA from Nitrosomonas eutropha (strain DSM 101675 / C91 / Nm57).